The chain runs to 201 residues: UPF0301 protein RER_60040 (201 aa).

This sequence belongs to the UPF0301 (AlgH) family.

This Rhodococcus erythropolis (strain PR4 / NBRC 100887) protein is UPF0301 protein RER_60040.